The following is a 295-amino-acid chain: Nucleotide-binding protein LSEI_0959 (295 aa).

12–19 (GMSGAGKT) provides a ligand contact to ATP. 62 to 65 (DLRS) contacts GTP.

Belongs to the RapZ-like family.

In terms of biological role, displays ATPase and GTPase activities. The sequence is that of Nucleotide-binding protein LSEI_0959 from Lacticaseibacillus paracasei (strain ATCC 334 / BCRC 17002 / CCUG 31169 / CIP 107868 / KCTC 3260 / NRRL B-441) (Lactobacillus paracasei).